The primary structure comprises 245 residues: Transcriptional regulatory protein YpdB (245 aa).

A Response regulatory domain is found at K2–E116. Residue D53 is modified to 4-aspartylphosphate. The region spanning I140–L245 is the HTH LytTR-type domain.

Post-translationally, phosphorylated by YpdA.

Its subcellular location is the cytoplasm. In terms of biological role, member of the two-component regulatory system YpdA/YpdB. YpdB regulates expression of yhjX by binding to its promoter region. This is Transcriptional regulatory protein YpdB (ypdB) from Escherichia coli O6:H1 (strain CFT073 / ATCC 700928 / UPEC).